The following is a 126-amino-acid chain: MAPEEVTITVRLIRSFEHRNFKPVVYHGVNLDQTVKEFIIFLKQDVPLRTSLPPPFRNYKYDTLKIIHQAHKSKTNELVLSLEDDDRLLLKEDSTLKAAGIASETEIAFFCEEDYKNYKANPISSW.

It belongs to the UPF0538 family.

This Pongo abelii (Sumatran orangutan) protein is UPF0538 protein C2orf76 homolog.